The sequence spans 246 residues: 7-cyano-7-deazaguanine synthase (246 aa).

Position 24–34 (24–34 (FSGGLDSTTVL)) interacts with ATP. Residues C209, C219, C222, and C225 each contribute to the Zn(2+) site.

Belongs to the QueC family. The cofactor is Zn(2+).

It carries out the reaction 7-carboxy-7-deazaguanine + NH4(+) + ATP = 7-cyano-7-deazaguanine + ADP + phosphate + H2O + H(+). Its pathway is purine metabolism; 7-cyano-7-deazaguanine biosynthesis. Its function is as follows. Catalyzes the ATP-dependent conversion of 7-carboxy-7-deazaguanine (CDG) to 7-cyano-7-deazaguanine (preQ(0)). In Polynucleobacter asymbioticus (strain DSM 18221 / CIP 109841 / QLW-P1DMWA-1) (Polynucleobacter necessarius subsp. asymbioticus), this protein is 7-cyano-7-deazaguanine synthase.